We begin with the raw amino-acid sequence, 505 residues long: Activin receptor type-1B (505 aa).

The first 23 residues, 1–23 (MAESAGASSFFPLVVLLLAGSGG), serve as a signal peptide directing secretion. At 24 to 126 (SGPRGIQALL…AHPSMWGPVE (103 aa)) the chain is on the extracellular side. N-linked (GlcNAc...) asparagine glycosylation occurs at Asn-43. The helical transmembrane segment at 127 to 149 (LVGIIAGPVFLLFLIIIIVFLVI) threads the bilayer. At 150 to 505 (NYHQRVYHNR…QLSVQEDVKI (356 aa)) the chain is on the cytoplasmic side. Positions 177-206 (KTLQDLVYDLSTSGSGSGLPLFVQRTVART) constitute a GS domain. Residues 207–497 (IVLQEIIGKG…LRIKKTLSQL (291 aa)) enclose the Protein kinase domain. ATP-binding positions include 213-221 (IGKGRFGEV) and Lys-234. Catalysis depends on Asp-335, which acts as the Proton acceptor. Tyr-380 is modified (phosphotyrosine).

It belongs to the protein kinase superfamily. TKL Ser/Thr protein kinase family. TGFB receptor subfamily. In terms of assembly, forms an activin receptor complex with activin receptor type-2 (ACVR2A or ACVR2B). Part of a complex consisting of MAGI2/ARIP1, ACVR2A, ACVR1B and SMAD3. Interacts with SMAD2 and SMAD3. Interacts with SMAD7. Interacts with FKBP1A. Interacts with IGSF1. Interacts with CRIPTO. Interacts with TDP2. Interacts with TSC22D1/TSC-22. Post-translationally, autophosphorylated. Phosphorylated by activin receptor type-2 (ACVR2A or ACVR2B) in response to activin-binding at serine and threonine residues in the GS domain. Phosphorylation of ACVR1B by activin receptor type-2 regulates association with SMAD7. Ubiquitinated. Level of ubiquitination is regulated by the SMAD7-SMURF1 complex. In terms of processing, ubiquitinated.

The protein localises to the cell membrane. The enzyme catalyses L-threonyl-[receptor-protein] + ATP = O-phospho-L-threonyl-[receptor-protein] + ADP + H(+). It carries out the reaction L-seryl-[receptor-protein] + ATP = O-phospho-L-seryl-[receptor-protein] + ADP + H(+). With respect to regulation, activin receptor type-2 (ACVR2A or ACVR2B) activates the type-1 receptor through phosphorylation of its regulatory GS domain. In terms of biological role, transmembrane serine/threonine kinase activin type-1 receptor forming an activin receptor complex with activin receptor type-2 (ACVR2A or ACVR2B). Transduces the activin signal from the cell surface to the cytoplasm and is thus regulating a many physiological and pathological processes including neuronal differentiation and neuronal survival, hair follicle development and cycling, FSH production by the pituitary gland, wound healing, extracellular matrix production, immunosuppression and carcinogenesis. Activin is also thought to have a paracrine or autocrine role in follicular development in the ovary. Within the receptor complex, type-2 receptors (ACVR2A and/or ACVR2B) act as a primary activin receptors whereas the type-1 receptors like ACVR1B act as downstream transducers of activin signals. Activin binds to type-2 receptor at the plasma membrane and activates its serine-threonine kinase. The activated receptor type-2 then phosphorylates and activates the type-1 receptor such as ACVR1B. Once activated, the type-1 receptor binds and phosphorylates the SMAD proteins SMAD2 and SMAD3, on serine residues of the C-terminal tail. Soon after their association with the activin receptor and subsequent phosphorylation, SMAD2 and SMAD3 are released into the cytoplasm where they interact with the common partner SMAD4. This SMAD complex translocates into the nucleus where it mediates activin-induced transcription. Inhibitory SMAD7, which is recruited to ACVR1B through FKBP1A, can prevent the association of SMAD2 and SMAD3 with the activin receptor complex, thereby blocking the activin signal. Activin signal transduction is also antagonized by the binding to the receptor of inhibin-B via the IGSF1 inhibin coreceptor. ACVR1B also phosphorylates TDP2. This is Activin receptor type-1B (Acvr1b) from Mus musculus (Mouse).